The chain runs to 174 residues: uncharacterized protein (174 aa).

The interval 137–174 (TNVTLGDDTPKSYDAPVSAIPPPATATTANATGVKPLE) is disordered.

This is an uncharacterized protein from Acanthamoeba polyphaga (Amoeba).